Consider the following 142-residue polypeptide: Large ribosomal subunit protein uL13 (142 aa).

This sequence belongs to the universal ribosomal protein uL13 family. Part of the 50S ribosomal subunit.

Its function is as follows. This protein is one of the early assembly proteins of the 50S ribosomal subunit, although it is not seen to bind rRNA by itself. It is important during the early stages of 50S assembly. In Francisella philomiragia subsp. philomiragia (strain ATCC 25017 / CCUG 19701 / FSC 153 / O#319-036), this protein is Large ribosomal subunit protein uL13.